A 201-amino-acid chain; its full sequence is Osmotically-inducible protein Y (201 aa).

Positions 1-28 are cleaved as a signal peptide; sequence MTMTRLKISKTLLAVMLTSAVATGSAYA. 2 BON domains span residues 55–123 and 134–201; these read DDSA…HVRD and GDTA…LKTK.

The protein localises to the periplasm. This is Osmotically-inducible protein Y (osmY) from Escherichia coli (strain K12).